A 484-amino-acid chain; its full sequence is Glycogen synthase (484 aa).

Lysine 15 provides a ligand contact to ADP-alpha-D-glucose.

It belongs to the glycosyltransferase 1 family. Bacterial/plant glycogen synthase subfamily.

It carries out the reaction [(1-&gt;4)-alpha-D-glucosyl](n) + ADP-alpha-D-glucose = [(1-&gt;4)-alpha-D-glucosyl](n+1) + ADP + H(+). It participates in glycan biosynthesis; glycogen biosynthesis. Synthesizes alpha-1,4-glucan chains using ADP-glucose. The protein is Glycogen synthase of Bacillus licheniformis (strain ATCC 14580 / DSM 13 / JCM 2505 / CCUG 7422 / NBRC 12200 / NCIMB 9375 / NCTC 10341 / NRRL NRS-1264 / Gibson 46).